The sequence spans 544 residues: Protein kinase dsk1 (544 aa).

Residues 81 to 516 (YVVERKLGWG…AGYMSNSPWL (436 aa)) enclose the Protein kinase domain. Residues 87-95 (LGWGHFSTV) and K110 each bind ATP. D214 functions as the Proton acceptor in the catalytic mechanism. 2 disordered regions span residues 235 to 299 (PATT…SSPF) and 316 to 341 (ISLRDSQKHNSHPNSPFSSGDNSLIL). The span at 237-254 (TTSSPTSNTSSSKTRNNT) shows a compositional bias: low complexity. Polar residues-rich tracts occupy residues 281-299 (KNPTKNSKPAGQVIPSSPF) and 327-337 (HPNSPFSSGDN).

Belongs to the protein kinase superfamily. Ser/Thr protein kinase family. Phosphorylated on Ser residue(s).

The protein localises to the cytoplasm. It is found in the nucleus. It catalyses the reaction L-seryl-[protein] + ATP = O-phospho-L-seryl-[protein] + ADP + H(+). The enzyme catalyses L-threonyl-[protein] + ATP = O-phospho-L-threonyl-[protein] + ADP + H(+). Its function is as follows. May play an important role in mitotic control by altering cellular location, degree of phosphorylation and kinase activity. Abundant expression accelerates the exit when cells are in M-phase and also delays the entry into mitosis when cells are in G2. Phosphorylates prp2 in vitro and so may have a role in co-ordinating pre-mRNA splicing with the progression of the cell division cycle. This chain is Protein kinase dsk1 (dsk1), found in Schizosaccharomyces pombe (strain 972 / ATCC 24843) (Fission yeast).